An 80-amino-acid polypeptide reads, in one-letter code: Progonadoliberin-1 (80 aa).

The N-terminal stretch at M1–A21 is a signal peptide. Q22 is subject to Pyrrolidone carboxylic acid. G31 is modified (glycine amide).

It belongs to the GnRH family.

The protein resides in the secreted. Functionally, stimulates the secretion of gonadotropins. The polypeptide is Progonadoliberin-1 (gnrh1) (Clarias gariepinus (North African catfish)).